A 239-amino-acid chain; its full sequence is THAP domain-containing protein 3 (239 aa).

The segment at 1-82 (MPKSCAARQC…LKHNAVPTVF (82 aa)) adopts a THAP-type zinc-finger fold. 2 disordered regions span residues 88–125 (PQLV…LGRK) and 139–174 (VGGL…PTQP). The short motif at 176–179 (DHSY) is the HCFC1-binding motif (HBM) element.

Component of a THAP1/THAP3-HCFC1-OGT complex that contains at least, either THAP1 or THAP3, HCFC1 and OGT. Interacts directly with OGT and HCFC1 (via its HBM).

Component of a THAP1/THAP3-HCFC1-OGT complex that is required for the regulation of the transcriptional activity of RRM1. This chain is THAP domain-containing protein 3 (THAP3), found in Bos taurus (Bovine).